We begin with the raw amino-acid sequence, 53 residues long: UPF0391 membrane protein GFO_1615 (53 aa).

Helical transmembrane passes span 4–24 and 27–47; these read LIVI…GGVA and AADI…ISVL.

This sequence belongs to the UPF0391 family.

It is found in the cell membrane. The chain is UPF0391 membrane protein GFO_1615 from Christiangramia forsetii (strain DSM 17595 / CGMCC 1.15422 / KT0803) (Gramella forsetii).